The sequence spans 506 residues: MRRQADRESVLPDYVKVLKPLPFNFSNFSNRQLFANFKMTDFCLLSALDLAQLVRTRQVSPLEITQYYLDRLGKYDQTVGSFAHVAWESAIADAKQKTKYLAGMGNSEPLPPFFGVPIAVKDLNCVADMPVSYGVSALKENLATYDDGVVAKMKAAGFTIVGKTVTSQLGSFPYTEPPGFLPARNPWHLDYNAGGSSGGSAAAVAAGLVPIAQGSDGGGSVRTPAACCSLVGFKPSRGRVSQAPVGDYQSGIACHGPLSRTVLEAAALLDVMEGYITGDPYWLPSPDRPFVETTGETPGQLRLAYAFSLPPFSSSSEIQGAVAKVIAVCENLGHQLEEACFDVTSLIEPFAQIWKAGVGASGIPLPLLESVNQWLGETSGTAGDYLRGVRNMQVISRQIVGFMEQYDALILPVFNHRPPKIGEWTHLSPPDVVQKIIEWIAPCPPANAAGLPAIAIPVGFDDQGLPLSVQIIGKPAADALVLALAHQMEQQLQGNQPRQLPLQFMP.

Residues K121 and S196 each act as charge relay system in the active site. The Acyl-ester intermediate role is filled by S220.

The protein belongs to the amidase family.

The enzyme catalyses a monocarboxylic acid amide + H2O = a monocarboxylate + NH4(+). The polypeptide is Putative amidase (Synechocystis sp. (strain ATCC 27184 / PCC 6803 / Kazusa)).